Reading from the N-terminus, the 193-residue chain is Mesogenin-1 (193 aa).

A disordered region spans residues 34 to 59 (GPFELNQASPSQSLSPAPSLESYSSS). Over residues 40–59 (QASPSQSLSPAPSLESYSSS) the composition is skewed to low complexity. In terms of domain architecture, bHLH spans 124–178 (QRRRKASEREKLRMRTLADALHTLRNYLPPVYSQRGQPLTKIQTLKYTIKYIGEL).

The protein resides in the nucleus. In terms of biological role, involved in specifying the paraxial, but not dorsal, mesoderm. May regulate the expression of T-box transcription factors required for mesoderm formation and differentiation. The sequence is that of Mesogenin-1 (MSGN1) from Homo sapiens (Human).